We begin with the raw amino-acid sequence, 156 residues long: Small ribosomal subunit protein uS7c (156 aa).

The protein belongs to the universal ribosomal protein uS7 family. As to quaternary structure, part of the 30S ribosomal subunit.

The protein localises to the plastid. The protein resides in the chloroplast. Functionally, one of the primary rRNA binding proteins, it binds directly to 16S rRNA where it nucleates assembly of the head domain of the 30S subunit. The chain is Small ribosomal subunit protein uS7c (rps7) from Cycas revoluta (Sago palm).